Reading from the N-terminus, the 405-residue chain is Argininosuccinate synthase (405 aa).

Residues 10–18 (AYSGGLDTS) and alanine 37 contribute to the ATP site. Tyrosine 88 and serine 93 together coordinate L-citrulline. Glycine 118 lines the ATP pocket. Threonine 120, asparagine 124, and aspartate 125 together coordinate L-aspartate. Asparagine 124 provides a ligand contact to L-citrulline. Residues arginine 128, serine 179, serine 188, glutamate 264, and tyrosine 276 each coordinate L-citrulline.

This sequence belongs to the argininosuccinate synthase family. Type 1 subfamily. As to quaternary structure, homotetramer.

It is found in the cytoplasm. It carries out the reaction L-citrulline + L-aspartate + ATP = 2-(N(omega)-L-arginino)succinate + AMP + diphosphate + H(+). It participates in amino-acid biosynthesis; L-arginine biosynthesis; L-arginine from L-ornithine and carbamoyl phosphate: step 2/3. The polypeptide is Argininosuccinate synthase (Pseudomonas entomophila (strain L48)).